A 225-amino-acid chain; its full sequence is Transcription factor MYB1 (225 aa).

HTH myb-type domains lie at 11 to 67 (LGRV…KPSI) and 68 to 118 (KRGH…YKKH). 2 consecutive DNA-binding regions (H-T-H motif) follow at residues 39–63 (WKRV…LNYL) and 91–114 (WSLI…NTHL).

In terms of assembly, no interactions with bHLH.

It localises to the nucleus. Functionally, activates DODA1 and CYP76AD1 in the betalain red pigment pathway. This chain is Transcription factor MYB1, found in Beta vulgaris (Sugar beet).